Reading from the N-terminus, the 494-residue chain is Guanosine-5'-triphosphate,3'-diphosphate pyrophosphatase (494 aa).

Belongs to the GppA/Ppx family. GppA subfamily.

It catalyses the reaction guanosine 3'-diphosphate 5'-triphosphate + H2O = guanosine 3',5'-bis(diphosphate) + phosphate + H(+). It functions in the pathway purine metabolism; ppGpp biosynthesis; ppGpp from GTP: step 2/2. Functionally, catalyzes the conversion of pppGpp to ppGpp. Guanosine pentaphosphate (pppGpp) is a cytoplasmic signaling molecule which together with ppGpp controls the 'stringent response', an adaptive process that allows bacteria to respond to amino acid starvation, resulting in the coordinated regulation of numerous cellular activities. The protein is Guanosine-5'-triphosphate,3'-diphosphate pyrophosphatase of Escherichia coli O127:H6 (strain E2348/69 / EPEC).